Consider the following 149-residue polypeptide: Large ribosomal subunit protein bL9 (149 aa).

It belongs to the bacterial ribosomal protein bL9 family.

Its function is as follows. Binds to the 23S rRNA. The protein is Large ribosomal subunit protein bL9 of Buchnera aphidicola subsp. Cinara cedri (strain Cc).